We begin with the raw amino-acid sequence, 523 residues long: Calcium uptake protein 3, mitochondrial (523 aa).

The transit peptide at 1–6 (MAALRR) directs the protein to the mitochondrion. The region spanning 226-261 (PHAGFRIAFNMFDTDGNEMVDKKEFLVLQEIFRKKN) is the EF-hand 1 domain. Residues Asp-238, Asp-240, Asn-242, Met-244, Asp-246, and Glu-249 each coordinate Ca(2+). An EF-hand 2; degenerate domain is found at 395–430 (ENTSVFLENVRYSISEEKGITFDEFRSFFQFLNNLE). One can recognise an EF-hand 3 domain in the interval 464–499 (SPHLVNTVFKIFDVDKDDQLSYKEFIGIMKDRLHRG). Residues Asp-476, Asp-478, Asp-480, Gln-482, and Glu-487 each coordinate Ca(2+).

Belongs to the MICU1 family. MICU3 subfamily. As to quaternary structure, heterodimer; disulfide-linked; heterodimerizes with MICU1. Heterodimerizes with isoform 3 of MICU1 (MICU1.1) in skeletal muscle. Component of the uniplex complex, composed of MCU, EMRE/SMDT1, MICU1 and MICU3 in a 4:4:1:1 stoichiometry. In terms of tissue distribution, predominantly expressed in skeletal muscle and central nervous system.

The protein resides in the mitochondrion intermembrane space. Its subcellular location is the mitochondrion inner membrane. In terms of biological role, tissue-specific calcium sensor of the mitochondrial calcium uniporter (MCU) channel, which specifically regulates MCU channel activity in the central nervous system and skeletal muscle. Senses calcium level via its EF-hand domains: compared to MICU1 and MICU2, MICU3 has a higher affinity for calcium. MICU1 and MICU3 form a disulfide-linked heterodimer that stimulates and inhibits MCU activity, depending on the concentration of calcium. At low calcium levels, MICU1 occludes the pore of the MCU channel, preventing mitochondrial calcium uptake. At higher calcium levels, calcium-binding to MICU1 and MICU3 induces a conformational change that weakens MCU-MICU1 interactions and moves the MICU1-MICU3 heterodimer away from the pore, allowing calcium permeation through the MCU channel. The high calcium affinity of MICU3 lowers the calcium threshold necessary for calcium permeation through the MCU channel. The MICU1-MICU3 heterodimer promotes flexibility of neurotransmission in neuronal cells by enhancing mitochondrial calcium uptake in presynapses. It is also required to increase mitochondrial calcium uptake in skeletal muscle cells, thereby increasing ATP production. The sequence is that of Calcium uptake protein 3, mitochondrial from Mus musculus (Mouse).